The primary structure comprises 161 residues: Nucleotide-binding protein lpg1167 (161 aa).

This sequence belongs to the YajQ family.

Functionally, nucleotide-binding protein. The protein is Nucleotide-binding protein lpg1167 of Legionella pneumophila subsp. pneumophila (strain Philadelphia 1 / ATCC 33152 / DSM 7513).